Reading from the N-terminus, the 570-residue chain is Trans-cinnamate:CoA ligase, peroxisomal (570 aa).

Residues 568–570 (ARL) carry the Microbody targeting signal motif.

The protein belongs to the ATP-dependent AMP-binding enzyme family. In terms of assembly, monomer. K(+) serves as cofactor. In terms of tissue distribution, mostly expressed in flower organs, with highest levels in corollas and petal limbs, and, to a lesser extent, in petal tubes, sepals, pistils, stamen, stigma, anthers and ovaries. Also present at low levels in leaves, stems and roots.

It is found in the peroxisome. It carries out the reaction (E)-4-coumarate + ATP + CoA = (E)-4-coumaroyl-CoA + AMP + diphosphate. The catalysed reaction is (E)-caffeate + ATP + CoA = (E)-caffeoyl-CoA + AMP + diphosphate. It catalyses the reaction (E)-cinnamate + ATP + CoA = (E)-cinnamoyl-CoA + AMP + diphosphate. The protein operates within phenylpropanoid metabolism; trans-cinnamate biosynthesis. Its pathway is phytoalexin biosynthesis; 3,4',5-trihydroxystilbene biosynthesis; 3,4',5-trihydroxystilbene from trans-4-coumarate: step 1/2. Involved in the biosynthesis of floral volatile benzenoid/phenylpropanoid (FVBP) scent (e.g. benzylbenzoate, phenylethylbenzoate, and methylbenzoate). Catalyzes the formation of CoA esters of cinnamic acid, and, with lower efficiency, of 4-coumaric acid and caffeic acid. This is Trans-cinnamate:CoA ligase, peroxisomal from Petunia hybrida (Petunia).